We begin with the raw amino-acid sequence, 788 residues long: MLNSVKKLLGDSQKRKLKKYEQLVQEINNLEEKLSDLSDEELRHKTITFKDMLRDGKTVDDIKVEAFAVVREAAKRVLGLRHYDVQLIGGLVLLEGNIAEMPTGEGKTLVSSLPTYVRALEGKGVHVITVNDYLAKRDKELIGQVHEFLGLKVGLNIPQIDPSEKKLAYEADITYGIGTEFGFDYLRDNMAASKNEQVQRPYHFAIIDEIDSVLIDEAKTPLIIAGKKSSSSDLHYLCAKVIKSFQDTLHYTYDAESKSASFTEDGITKIEDLFDIDNLYDLEHQTLYHYMIQALRAHVAFQCDVDYIVHDEKILLVDIFTGRVMDGRSLSDGLHQALEAKEGLEITEENQTQASITIQNFFRMYPALSGMTGTAKTEEKEFNRVYNMEVIPIPTNRPIIREDKKDVVYVTADAKYKAVREDVLKHNKQGRPILIGTMSILQSETVARYLDEANITYQLLNAKSAEQEADLIATAGQKGQITIATNMAGRGTDILLGEGVHELGGLHVIGTERHESRRVDNQLKGRAGRQGDPGSSQFFLSLEDEMLKRFAQEEIEKLTKSLKTDETGLILTAKVHDFVNRTQLICEGSHFSMREYNLKLDDVINDQRNVIYKLRNNLLQEDTNMIEIIIPMIDHAVEAISKQYLVEGMLPEEWDFASLTASLNEILSVENMPSLSANNVHSPEDLQSVLKETLSLYKERVNELDSNTDLQQSLRYVALHFLDQNWVNHLDAMTHLKEGIGLRQYQQEDPTRLYQKEALDIFLYTYGNFEKEMCRYVARHLGVPENVQ.

ATP-binding positions include glutamine 86, 104 to 108, and aspartate 493; that span reads GEGKT.

This sequence belongs to the SecA family. Monomer and homodimer. Part of the essential Sec protein translocation apparatus which comprises SecA, SecYEG and auxiliary proteins SecDF. Other proteins may also be involved.

The protein localises to the cell membrane. Its subcellular location is the cytoplasm. The enzyme catalyses ATP + H2O + cellular proteinSide 1 = ADP + phosphate + cellular proteinSide 2.. Its function is as follows. Part of the Sec protein translocase complex. Interacts with the SecYEG preprotein conducting channel. Has a central role in coupling the hydrolysis of ATP to the transfer of proteins into and across the cell membrane, serving as an ATP-driven molecular motor driving the stepwise translocation of polypeptide chains across the membrane. The chain is Protein translocase subunit SecA 2 from Bacillus cereus (strain ZK / E33L).